Reading from the N-terminus, the 383-residue chain is Succinyl-diaminopimelate desuccinylase (383 aa).

Zn(2+) is bound at residue histidine 70. Aspartate 72 is an active-site residue. Aspartate 103 serves as a coordination point for Zn(2+). Glutamate 137 serves as the catalytic Proton acceptor. Zn(2+) contacts are provided by glutamate 138, glutamate 166, and histidine 352.

The protein belongs to the peptidase M20A family. DapE subfamily. In terms of assembly, homodimer. Zn(2+) serves as cofactor. Co(2+) is required as a cofactor.

The catalysed reaction is N-succinyl-(2S,6S)-2,6-diaminopimelate + H2O = (2S,6S)-2,6-diaminopimelate + succinate. The protein operates within amino-acid biosynthesis; L-lysine biosynthesis via DAP pathway; LL-2,6-diaminopimelate from (S)-tetrahydrodipicolinate (succinylase route): step 3/3. Catalyzes the hydrolysis of N-succinyl-L,L-diaminopimelic acid (SDAP), forming succinate and LL-2,6-diaminopimelate (DAP), an intermediate involved in the bacterial biosynthesis of lysine and meso-diaminopimelic acid, an essential component of bacterial cell walls. The chain is Succinyl-diaminopimelate desuccinylase from Hahella chejuensis (strain KCTC 2396).